Consider the following 34-residue polypeptide: Photosystem II reaction center protein Y (34 aa).

Residues 1–5 (DWRVL) are Lumenal-facing. Residues 6 to 22 (VVLLPVLLAAGWAVRNI) traverse the membrane as a helical segment. The Cytoplasmic portion of the chain corresponds to 23–34 (LPYAVKQVQKLL).

The protein belongs to the PsbY family. PSII is composed of 1 copy each of membrane proteins PsbA, PsbB, PsbC, PsbD, PsbE, PsbF, PsbH, PsbI, PsbJ, PsbK, PsbL, PsbM, PsbT, PsbX, PsbY, PsbZ, Psb30/Ycf12, peripheral proteins PsbO, CyanoQ (PsbQ), PsbU, PsbV and a large number of cofactors. It forms dimeric complexes. This protein is only loosely associated with PSII, and is not often found in crystals. The cofactor is PSII binds multiple chlorophylls, carotenoids and specific lipids..

It localises to the cellular thylakoid membrane. Its function is as follows. Loosely associated component of the core of photosystem II (PSII). PSII is a light-driven water plastoquinone oxidoreductase, using light energy to abstract electrons from H(2)O, generating a proton gradient subsequently used for ATP formation. The chain is Photosystem II reaction center protein Y from Thermostichus vulcanus (Synechococcus vulcanus).